Consider the following 1044-residue polypeptide: Ribonucleoside-diphosphate reductase subunit alpha (1044 aa).

3 consecutive ATP-cone domains span residues 9–111 (YTIV…KAER), 118–217 (IAII…ARAR), and 235–325 (YVVQ…ETLG). Substrate contacts are provided by residues Thr-440, 455-456 (SC), Gly-484, 668-672 (NLCTE), and 855-859 (PTATI). Cys-456 and Cys-685 form a disulfide bridge. Asn-668 functions as the Proton acceptor in the catalytic mechanism. The Cysteine radical intermediate role is filled by Cys-670. Glu-672 serves as the catalytic Proton acceptor.

Belongs to the ribonucleoside diphosphate reductase large chain family. Tetramer of two alpha and two beta subunits.

The enzyme catalyses a 2'-deoxyribonucleoside 5'-diphosphate + [thioredoxin]-disulfide + H2O = a ribonucleoside 5'-diphosphate + [thioredoxin]-dithiol. Under complex allosteric control mediated by deoxynucleoside triphosphates and ATP binding. The type of nucleotide bound at the specificity site determines substrate preference. It seems probable that ATP makes the enzyme reduce CDP and UDP, dGTP favors ADP reduction and dTTP favors GDP reduction. In terms of biological role, provides the precursors necessary for DNA synthesis. Catalyzes the biosynthesis of deoxyribonucleotides from the corresponding ribonucleotides. The polypeptide is Ribonucleoside-diphosphate reductase subunit alpha (nrdA) (Chlamydia pneumoniae (Chlamydophila pneumoniae)).